Consider the following 139-residue polypeptide: Plastocyanin (139 aa).

An N-terminal signal peptide occupies residues 1–34 (MKLIAQISRSLSLALFALVLMVGSFVAVMSPAAA). One can recognise a Plastocyanin-like domain in the interval 35-139 (ETFTVKMGAD…GMVGKITVEG (105 aa)). 4 residues coordinate Cu cation: H73, C123, H126, and M131.

This sequence belongs to the plastocyanin family. Cu(2+) is required as a cofactor.

The protein localises to the cellular thylakoid membrane. Its function is as follows. Participates in electron transfer between P700 and the cytochrome b6-f complex in photosystem I. The protein is Plastocyanin (petE) of Leptolyngbya laminosa (Phormidium laminosum).